A 228-amino-acid chain; its full sequence is Uracil-DNA glycosylase (228 aa).

D65 acts as the Proton acceptor in catalysis.

It belongs to the uracil-DNA glycosylase (UDG) superfamily. UNG family.

It is found in the cytoplasm. The enzyme catalyses Hydrolyzes single-stranded DNA or mismatched double-stranded DNA and polynucleotides, releasing free uracil.. Functionally, excises uracil residues from the DNA which can arise as a result of misincorporation of dUMP residues by DNA polymerase or due to deamination of cytosine. This Lacticaseibacillus paracasei (strain ATCC 334 / BCRC 17002 / CCUG 31169 / CIP 107868 / KCTC 3260 / NRRL B-441) (Lactobacillus paracasei) protein is Uracil-DNA glycosylase.